Consider the following 51-residue polypeptide: Large ribosomal subunit protein eL39 (51 aa).

It belongs to the eukaryotic ribosomal protein eL39 family.

This Methanothermobacter thermautotrophicus (strain ATCC 29096 / DSM 1053 / JCM 10044 / NBRC 100330 / Delta H) (Methanobacterium thermoautotrophicum) protein is Large ribosomal subunit protein eL39 (rpl39e).